A 361-amino-acid chain; its full sequence is Histidinol-phosphate aminotransferase (361 aa).

N6-(pyridoxal phosphate)lysine is present on K219.

It belongs to the class-II pyridoxal-phosphate-dependent aminotransferase family. Histidinol-phosphate aminotransferase subfamily. In terms of assembly, homodimer. Requires pyridoxal 5'-phosphate as cofactor.

It catalyses the reaction L-histidinol phosphate + 2-oxoglutarate = 3-(imidazol-4-yl)-2-oxopropyl phosphate + L-glutamate. It functions in the pathway amino-acid biosynthesis; L-histidine biosynthesis; L-histidine from 5-phospho-alpha-D-ribose 1-diphosphate: step 7/9. This Cereibacter sphaeroides (strain KD131 / KCTC 12085) (Rhodobacter sphaeroides) protein is Histidinol-phosphate aminotransferase.